Reading from the N-terminus, the 63-residue chain is Large ribosomal subunit protein eL37 (63 aa).

Zn(2+)-binding residues include cysteine 20, cysteine 23, cysteine 35, and cysteine 38. A C4-type zinc finger spans residues 20–38 (CRRCGRRAFNVKKGYCAAC).

The protein belongs to the eukaryotic ribosomal protein eL37 family. Part of the 50S ribosomal subunit. It depends on Zn(2+) as a cofactor.

Functionally, binds to the 23S rRNA. In Thermococcus kodakarensis (strain ATCC BAA-918 / JCM 12380 / KOD1) (Pyrococcus kodakaraensis (strain KOD1)), this protein is Large ribosomal subunit protein eL37.